The chain runs to 158 residues: Putative peptidoglycan-binding-like protein (158 aa).

The first 24 residues, 1–24, serve as a signal peptide directing secretion; the sequence is MRSPKVKFLTIFTFCIFITKMSFA.

Belongs to the IagB/IpgF/P19 family.

Its subcellular location is the periplasm. The sequence is that of Putative peptidoglycan-binding-like protein (pbl) from Escherichia coli (strain K12).